Here is a 42-residue protein sequence, read N- to C-terminus: Tachystatin-B2 (42 aa).

3 cysteine pairs are disulfide-bonded: Cys4/Cys20, Cys11/Cys25, and Cys19/Cys37.

Granular hemocytes, small secretory granules.

Its subcellular location is the secreted. Its function is as follows. Exhibits stronger antimicrobial activity against the Gram-positive bacteria (S.aureus (IC(50) is 7.4 ug/ml)) and fungi (C.albicans (IC(50) is 3.0 ug/ml) and P.pastoris (IC(50) is 0.1 ug/ml)) than Gram-negative bacteria (E.coli no inhibition at 100 ug/ml). Binds to chitin (4.3 uM are required to obtain 50% of binding). Does not cause hemolysis on sheep erythrocytes. Has no blocking activity on the P-type calcium channel. This is Tachystatin-B2 from Tachypleus tridentatus (Japanese horseshoe crab).